Reading from the N-terminus, the 322-residue chain is Dirigent protein 9 (322 aa).

The first 20 residues, 1–20 (MAKALHITIFLFLISSNLLA), serve as a signal peptide directing secretion.

It belongs to the plant dirigent protein family. As to quaternary structure, homodimer.

It is found in the secreted. The protein localises to the extracellular space. Its subcellular location is the apoplast. Functionally, dirigent proteins impart stereoselectivity on the phenoxy radical-coupling reaction, yielding optically active lignans from two molecules of coniferyl alcohol in the biosynthesis of lignans, flavonolignans, and alkaloids and thus plays a central role in plant secondary metabolism. In Arabidopsis thaliana (Mouse-ear cress), this protein is Dirigent protein 9 (DIR9).